Reading from the N-terminus, the 70-residue chain is Putative RNA-binding protein YbcJ (70 aa).

Positions 12–68 (VELCDLLKLEGWSESGAQAKIAIAEGQVKVDGAVETRKRCKIVAGQTVSFAGHSVQV) constitute an S4 RNA-binding domain.

In terms of assembly, in pull-down experiments interacts with CedA.

In terms of biological role, its structure and the presence of conserved basic residues indicates that it probably binds RNA. This is Putative RNA-binding protein YbcJ (ybcJ) from Escherichia coli (strain K12).